We begin with the raw amino-acid sequence, 215 residues long: NAD(P)H-quinone oxidoreductase subunit I (215 aa).

4Fe-4S ferredoxin-type domains are found at residues glycine 55 to valine 84 and arginine 95 to glutamate 124. Positions 64, 67, 70, 74, 104, 107, 110, and 114 each coordinate [4Fe-4S] cluster. A compositionally biased stretch (basic and acidic residues) spans methionine 169–arginine 180. The disordered stretch occupies residues methionine 169 to alanine 215.

Belongs to the complex I 23 kDa subunit family. In terms of assembly, NDH-1 is composed of at least 11 different subunits. [4Fe-4S] cluster is required as a cofactor.

It is found in the cellular thylakoid membrane. The enzyme catalyses a plastoquinone + NADH + (n+1) H(+)(in) = a plastoquinol + NAD(+) + n H(+)(out). It catalyses the reaction a plastoquinone + NADPH + (n+1) H(+)(in) = a plastoquinol + NADP(+) + n H(+)(out). In terms of biological role, NDH-1 shuttles electrons from an unknown electron donor, via FMN and iron-sulfur (Fe-S) centers, to quinones in the respiratory and/or the photosynthetic chain. The immediate electron acceptor for the enzyme in this species is believed to be plastoquinone. Couples the redox reaction to proton translocation, and thus conserves the redox energy in a proton gradient. The polypeptide is NAD(P)H-quinone oxidoreductase subunit I (Synechococcus sp. (strain CC9605)).